Reading from the N-terminus, the 148-residue chain is UPF0178 protein DP1304 (148 aa).

It belongs to the UPF0178 family.

The polypeptide is UPF0178 protein DP1304 (Desulfotalea psychrophila (strain LSv54 / DSM 12343)).